Consider the following 396-residue polypeptide: Putative nickel insertion protein (396 aa).

Residues 333–355 (RSKLARESQTVETPDGPAKGKTV) form a disordered region.

It belongs to the LarC family.

The sequence is that of Putative nickel insertion protein from Rhodopirellula baltica (strain DSM 10527 / NCIMB 13988 / SH1).